Reading from the N-terminus, the 103-residue chain is Phosphoribosyl-ATP pyrophosphatase (103 aa).

It belongs to the PRA-PH family.

It localises to the cytoplasm. It catalyses the reaction 1-(5-phospho-beta-D-ribosyl)-ATP + H2O = 1-(5-phospho-beta-D-ribosyl)-5'-AMP + diphosphate + H(+). It functions in the pathway amino-acid biosynthesis; L-histidine biosynthesis; L-histidine from 5-phospho-alpha-D-ribose 1-diphosphate: step 2/9. In Cereibacter sphaeroides (strain KD131 / KCTC 12085) (Rhodobacter sphaeroides), this protein is Phosphoribosyl-ATP pyrophosphatase.